The following is a 614-amino-acid chain: Adenylate kinase 7 (614 aa).

Residues 258–503 are adenylate kinase; it reads PIKICILGPP…KEIGKPRNYG (246 aa). 268–273 lines the ATP pocket; sequence AVGKSS. The tract at residues 288–346 is NMP; sequence KMKDVIAEAIAKLEAIVAPKDSVEGEEEGEEEEEEENVDDAQELLDGIKESMEQNAGRL. The interval 308–327 is disordered; the sequence is DSVEGEEEGEEEEEEENVDD. Acidic residues predominate over residues 311–327; the sequence is EGEEEGEEEEEEENVDD. AMP-binding positions include 323 to 346, 373 to 376, and Gln380; these read ENVDDAQELLDGIKESMEQNAGRL and GFPK. Positions 376–568 form a coiled coil; it reads KTYDQAKDLF…EERELLEVQS (193 aa). An LID region spans residues 428–438; the sequence is NLPESVVAGTH. Arg446 is an AMP binding site. ATP is bound at residue Gly478. The tract at residues 570 to 614 is DPY-30; it reads PLRNYLMTYVMPTLMQGLNECCKVRPEDPVDFLAEYLFKNNPEMQ.

The protein in the central section; belongs to the adenylate kinase family. In the C-terminal section; belongs to the dpy-30 family.

It is found in the cytoplasm. Its subcellular location is the cytosol. It localises to the cell projection. The protein resides in the cilium. The protein localises to the flagellum. The enzyme catalyses AMP + ATP = 2 ADP. It carries out the reaction a 2'-deoxyribonucleoside 5'-diphosphate + ATP = a 2'-deoxyribonucleoside 5'-triphosphate + ADP. It catalyses the reaction a ribonucleoside 5'-diphosphate + ATP = a ribonucleoside 5'-triphosphate + ADP. Nucleoside monophosphate (NMP) kinase that catalyzes the reversible transfer of the terminal phosphate group between nucleoside triphosphates and monophosphates. Has highest activity toward AMP, and weaker activity toward dAMP, CMP and dCMP. Also displays broad nucleoside diphosphate kinase activity. Involved in maintaining ciliary structure and function. The polypeptide is Adenylate kinase 7 (Ak7) (Mus musculus (Mouse)).